The primary structure comprises 75 residues: Small, acid-soluble spore protein Tlp (75 aa).

The protein belongs to the Tlp family.

The protein resides in the spore core. The chain is Small, acid-soluble spore protein Tlp from Geobacillus thermodenitrificans (strain NG80-2).